Consider the following 241-residue polypeptide: Demethylmenaquinone methyltransferase (241 aa).

S-adenosyl-L-methionine is bound by residues threonine 60, aspartate 81, and 106–107 (DA).

This sequence belongs to the class I-like SAM-binding methyltransferase superfamily. MenG/UbiE family.

The catalysed reaction is a 2-demethylmenaquinol + S-adenosyl-L-methionine = a menaquinol + S-adenosyl-L-homocysteine + H(+). It functions in the pathway quinol/quinone metabolism; menaquinone biosynthesis; menaquinol from 1,4-dihydroxy-2-naphthoate: step 2/2. In terms of biological role, methyltransferase required for the conversion of demethylmenaquinol (DMKH2) to menaquinol (MKH2). This Staphylococcus epidermidis (strain ATCC 35984 / DSM 28319 / BCRC 17069 / CCUG 31568 / BM 3577 / RP62A) protein is Demethylmenaquinone methyltransferase.